Here is a 1708-residue protein sequence, read N- to C-terminus: Clathrin heavy chain 2 (1708 aa).

Positions 1-492 (MAAANAPIAM…VDNDLALKIY (492 aa)) are globular terminal domain. 7 WD40-like repeat regions span residues 25 to 67 (FVTF…RPIT), 68 to 113 (ADSA…MPEQ), 114 to 155 (VVFW…ANLA), 156 to 205 (NNQI…QALE), 206 to 270 (AHAA…PDFQ), 271 to 314 (DDFP…ISPD), and 315 to 343 (PIFL…ATVN). A binding site for the uncoating ATPase, involved in lattice disassembly region spans residues 462 to 478 (ENWLAEDKLECSEELGD). Residues 493-536 (IKARATPKVVAAFAERREFDKILIYSKQVGYTPDYLFLLQTILR) form a flexible linker region. Residues 537–648 (TDPQGAVNFA…RALQHYTELP (112 aa)) are distal segment. The heavy chain arm stretch occupies residues 537 to 1708 (TDPQGAVNFA…AYGMPPMGSY (1172 aa)). CHCR repeat units lie at residues 551–697 (QMEG…QIVV), 700–842 (AKEY…PEDF), 847–986 (ILSV…QLID), 993–1138 (LPES…VSEA), 1142–1283 (FIRA…FRLA), 1288–1434 (LNII…DLIN), and 1437–1580 (LNVL…KECF). The tract at residues 653 to 1708 (VMVNTHAIEP…AYGMPPMGSY (1056 aa)) is proximal segment. Positions 1227–1536 (AAKIIYAFIS…YIYKKAGRWK (310 aa)) are involved in binding clathrin light chain. The trimerization stretch occupies residues 1564 to 1708 (SEDLLVYFIE…AYGMPPMGSY (145 aa)).

This sequence belongs to the clathrin heavy chain family. In terms of assembly, clathrin triskelions, composed of 3 heavy chains and 3 light chains, are the basic subunits of the clathrin coat.

Its subcellular location is the cytoplasmic vesicle membrane. The protein resides in the membrane. It localises to the coated pit. Clathrin is the major protein of the polyhedral coat of coated pits and vesicles. The protein is Clathrin heavy chain 2 of Oryza sativa subsp. japonica (Rice).